A 344-amino-acid polypeptide reads, in one-letter code: Eukaryotic translation initiation factor 2 subunit alpha homolog (344 aa).

The region spanning D21–R92 is the S1 motif domain. Phosphoserine; by GCN2 is present on S56. Positions D312–E344 are disordered. Acidic residues predominate over residues E314 to L336.

It belongs to the eIF-2-alpha family. As to quaternary structure, heterotrimer composed of an alpha, a beta and a gamma chain. In terms of processing, phosphorylated at Ser-56 by GCN2.

Functionally, functions in the early steps of protein synthesis by forming a ternary complex with GTP and initiator tRNA. This complex binds to a 40S ribosomal subunit, followed by mRNA binding to form a 43S pre-initiation complex. Junction of the 60S ribosomal subunit to form the 80S initiation complex is preceded by hydrolysis of the GTP bound to eIF-2 and release of an eIF-2-GDP binary complex. In order for eIF-2 to recycle and catalyze another round of initiation, the GDP bound to eIF-2 must exchange with GTP by way of a reaction catalyzed by eIF-2B. This Arabidopsis thaliana (Mouse-ear cress) protein is Eukaryotic translation initiation factor 2 subunit alpha homolog.